We begin with the raw amino-acid sequence, 224 residues long: Respiratory supercomplex factor 2, mitochondrial (224 aa).

Topologically, residues 1-13 (MKILTQDEIEAHR) are mitochondrial intermembrane. The helical transmembrane segment at 14–38 (SHTLKGGIEGALAGFAISAIIFKVL) threads the bilayer. Over 39–47 (PRRYPKFKP) the chain is Mitochondrial matrix. Residues 48-75 (STLTWSIKTALWITPPTVLTAICAEEAS) traverse the membrane as a helical segment. Residues 76-103 (NNFDATMYGSGSSSEDALDEHRRWKSLS) are Mitochondrial intermembrane-facing. Positions 89-180 (SEDALDEHRR…YENKLHPNKQ (92 aa)) constitute an HIG1 domain. The chain crosses the membrane as a helical span at residues 104–133 (TKDKFVEGLSNNKYKIITGAWAASLYGSWV). The Mitochondrial matrix segment spans residues 134 to 142 (IVNKDPIMT). A helical membrane pass occupies residues 143 to 173 (KAQKIVQARMYAQFITVGLLLASVGLSMYEN). Topologically, residues 174–184 (KLHPNKQKVNE) are mitochondrial intermembrane. The helical transmembrane segment at 185–204 (MRRWENALRVAEEEERLEKE) threads the bilayer. Topologically, residues 205-224 (GRRTGYVSNEERINSKIFKS) are mitochondrial matrix.

Associates with a subpopulation of the cytochrome bc1-cytochrome c oxidase supercomplexes. Associates in substoichiometric amounts with complex IV. Interacts with COX3.

Its subcellular location is the mitochondrion membrane. Its function is as follows. Assembly factor that plays a role in the assembly of the respiratory chain supercomplexes (SCs) composed of ubiquinol-cytochrome c oxidoreductase (cytochrome b-c1 complex, complex III, CIII) and cytochrome c oxidase (complex IV, CIV). May be required for late-stage assembly of the COX12 and COX13 subunits. Required for the generation and maintenance of a normal proton motive force (PMF) across the inner mitochondrial membrane (IMM) by preventing proton leakage through an inactive population of CIV that accumulates when RCF1 and/or RCF2 proteins are absent. This chain is Respiratory supercomplex factor 2, mitochondrial (RCF2), found in Saccharomyces cerevisiae (strain ATCC 204508 / S288c) (Baker's yeast).